The following is a 217-amino-acid chain: CXXC-type zinc finger protein 4 (217 aa).

The tract at residues 1 to 20 (MHRNDSQRLGKPGGAPESLQ) is disordered. The CXXC-type zinc finger occupies 122–163 (AKKKRKRCGVCVPCKRLINCGVCSSCRNRKTGHQICKFRKCE). The Zn(2+) site is built by Cys-129, Cys-132, Cys-135, Cys-141, Cys-144, Cys-147, Cys-157, and Cys-162.

The protein resides in the cytoplasm. In terms of biological role, acts as a negative regulator of the Wnt signaling pathway required for anterior neural structure formation. Ectopic expression induces ventralization. Binds preferentially to DNA containing cytidine-phosphate-guanosine (CpG) dinucleotides over CpH (H=A, T, and C), hemimethylated-CpG and hemimethylated-hydroxymethyl-CpG. The sequence is that of CXXC-type zinc finger protein 4 (cxxc4) from Xenopus laevis (African clawed frog).